The following is a 373-amino-acid chain: Glutamate 5-kinase (373 aa).

Lys15 is an ATP binding site. Residues Ser56, Asp143, and Asn155 each coordinate substrate. Residue 175–176 (SD) coordinates ATP. The 78-residue stretch at 281-358 (KGTLTIDAGA…PDVMTILGIS (78 aa)) folds into the PUA domain.

This sequence belongs to the glutamate 5-kinase family.

The protein resides in the cytoplasm. It catalyses the reaction L-glutamate + ATP = L-glutamyl 5-phosphate + ADP. It participates in amino-acid biosynthesis; L-proline biosynthesis; L-glutamate 5-semialdehyde from L-glutamate: step 1/2. Its function is as follows. Catalyzes the transfer of a phosphate group to glutamate to form L-glutamate 5-phosphate. This Bradyrhizobium diazoefficiens (strain JCM 10833 / BCRC 13528 / IAM 13628 / NBRC 14792 / USDA 110) protein is Glutamate 5-kinase.